The chain runs to 538 residues: Probable bifunctional tRNA threonylcarbamoyladenosine biosynthesis protein (538 aa).

Residues 1-327 (MIVLICLGIE…FRTDEVEAPW (327 aa)) are kae1. Positions 111, 115, and 132 each coordinate Fe cation. Residues 132 to 136 (YVSGG), aspartate 164, glycine 177, glutamate 181, and asparagine 260 each bind L-threonylcarbamoyladenylate. Aspartate 288 contacts Fe cation. Residues 336-538 (KLPDNLIAKG…EIESRGRYTH (203 aa)) form the Protein kinase domain. ATP contacts are provided by residues 342 to 350 (IAKGAESDI) and lysine 363. Aspartate 452 functions as the Proton acceptor; for kinase activity in the catalytic mechanism.

In the N-terminal section; belongs to the KAE1 / TsaD family. The protein in the C-terminal section; belongs to the protein kinase superfamily. Tyr protein kinase family. BUD32 subfamily. Component of the KEOPS complex that consists of Kae1, Bud32, Cgi121 and Pcc1; the whole complex dimerizes. It depends on Fe(2+) as a cofactor.

It localises to the cytoplasm. The catalysed reaction is L-seryl-[protein] + ATP = O-phospho-L-seryl-[protein] + ADP + H(+). It carries out the reaction L-threonyl-[protein] + ATP = O-phospho-L-threonyl-[protein] + ADP + H(+). It catalyses the reaction L-threonylcarbamoyladenylate + adenosine(37) in tRNA = N(6)-L-threonylcarbamoyladenosine(37) in tRNA + AMP + H(+). Functionally, required for the formation of a threonylcarbamoyl group on adenosine at position 37 (t(6)A37) in tRNAs that read codons beginning with adenine. Is a component of the KEOPS complex that is probably involved in the transfer of the threonylcarbamoyl moiety of threonylcarbamoyl-AMP (TC-AMP) to the N6 group of A37. The Kae1 domain likely plays a direct catalytic role in this reaction. The Bud32 domain probably displays kinase activity that regulates Kae1 function. The sequence is that of Probable bifunctional tRNA threonylcarbamoyladenosine biosynthesis protein from Methanobrevibacter smithii (strain ATCC 35061 / DSM 861 / OCM 144 / PS).